We begin with the raw amino-acid sequence, 559 residues long: Terpene synthase 1 (559 aa).

Mg(2+)-binding residues include Asp-312, Asp-316, Asp-456, and Glu-464. A DDXXD motif motif is present at residues 312 to 316; sequence DDLYD.

The protein belongs to the terpene synthase family. Tpsa subfamily. Mg(2+) is required as a cofactor. Mn(2+) serves as cofactor. In terms of tissue distribution, mostly expressed in stems and, to a lower extent, in leaves, roots and fruits.

The catalysed reaction is (2E,6E)-farnesyl diphosphate = (-)-(E)-beta-caryophyllene + diphosphate. It carries out the reaction (2E,6E)-farnesyl diphosphate = alpha-humulene + diphosphate. Its pathway is secondary metabolite biosynthesis; terpenoid biosynthesis. Functionally, sesquiterpene synthase involved in the biosynthesis of volatile compounds that contribute to the characteristic flavors of black pepper. Mediates the conversion of (2E,6E)-farnesyl diphosphate (FPP) into beta-caryophyllene and, as a minor compound, into alpha-humulene. This chain is Terpene synthase 1, found in Piper nigrum (Black pepper).